A 349-amino-acid chain; its full sequence is Fe(3+) ions import ATP-binding protein FbpC (349 aa).

The region spanning 4 to 236 (LELHHIGKSY…PVDEPTATFL (233 aa)) is the ABC transporter domain. An ATP-binding site is contributed by 36 to 43 (GPSGSGKT).

Belongs to the ABC transporter superfamily. Fe(3+) ion importer (TC 3.A.1.10) family. The complex is composed of two ATP-binding proteins (FbpC), two transmembrane proteins (FbpB) and a solute-binding protein (FbpA).

Its subcellular location is the cell inner membrane. The enzyme catalyses Fe(3+)(out) + ATP + H2O = Fe(3+)(in) + ADP + phosphate + H(+). Part of the ABC transporter complex FbpABC involved in Fe(3+) ions import. Responsible for energy coupling to the transport system. This is Fe(3+) ions import ATP-binding protein FbpC from Yersinia pseudotuberculosis serotype I (strain IP32953).